The chain runs to 287 residues: Inorganic pyrophosphatase (287 aa).

R79 lines the diphosphate pocket. Residues D116, D121, and D153 each coordinate Mg(2+).

It belongs to the PPase family. The cofactor is Mg(2+).

It localises to the cytoplasm. The enzyme catalyses diphosphate + H2O = 2 phosphate + H(+). The sequence is that of Inorganic pyrophosphatase (IPP1) from Eremothecium gossypii (strain ATCC 10895 / CBS 109.51 / FGSC 9923 / NRRL Y-1056) (Yeast).